A 49-amino-acid chain; its full sequence is Large ribosomal subunit protein bL33B (49 aa).

Belongs to the bacterial ribosomal protein bL33 family.

This Geobacillus thermodenitrificans (strain NG80-2) protein is Large ribosomal subunit protein bL33B.